Reading from the N-terminus, the 142-residue chain is Transcription antitermination protein NusB (142 aa).

Belongs to the NusB family.

Its function is as follows. Involved in transcription antitermination. Required for transcription of ribosomal RNA (rRNA) genes. Binds specifically to the boxA antiterminator sequence of the ribosomal RNA (rrn) operons. This chain is Transcription antitermination protein NusB, found in Anaeromyxobacter dehalogenans (strain 2CP-1 / ATCC BAA-258).